The primary structure comprises 147 residues: Globin, major monomeric component (147 aa).

Residues 1–146 form the Globin domain; that stretch reads GLSAAQRQVI…ISGALISGLQ (146 aa). H90 provides a ligand contact to heme b.

Belongs to the globin family. Monomer.

The chain is Globin, major monomeric component from Glycera dibranchiata (Bloodworm).